The following is a 1217-amino-acid chain: ATP-dependent helicase/nuclease subunit A (1217 aa).

The 466-residue stretch at 10–475 folds into the UvrD-like helicase ATP-binding domain; that stretch reads VIWTDAQWQS…IDLSQNFRSR (466 aa). 31 to 38 contacts ATP; the sequence is AAAGSGKT. The UvrD-like helicase C-terminal domain maps to 476–786; the sequence is KEVLSTTNYI…RMMTIHSSKG (311 aa).

It belongs to the helicase family. AddA subfamily. Heterodimer of AddA and AddB/RexB. Requires Mg(2+) as cofactor.

It carries out the reaction Couples ATP hydrolysis with the unwinding of duplex DNA by translocating in the 3'-5' direction.. The catalysed reaction is ATP + H2O = ADP + phosphate + H(+). The heterodimer acts as both an ATP-dependent DNA helicase and an ATP-dependent, dual-direction single-stranded exonuclease. Recognizes the chi site generating a DNA molecule suitable for the initiation of homologous recombination. The AddA nuclease domain is required for chi fragment generation; this subunit has the helicase and 3' -&gt; 5' nuclease activities. This Staphylococcus aureus (strain Mu3 / ATCC 700698) protein is ATP-dependent helicase/nuclease subunit A.